The primary structure comprises 537 residues: Protein swallow (537 aa).

The tract at residues 344-406 (QPNAGKPKKN…SESSHPSSND (63 aa)) is disordered. 2 stretches are compositionally biased toward low complexity: residues 371 to 383 (NGNG…HSSS) and 392 to 406 (AAPN…SSND).

In terms of assembly, may be constituted of a homo- or heterodimer.

The protein resides in the nucleus. Its function is as follows. Has a role in localizing bicoid mRNA at the anterior margin of the oocyte during oogenesis, and a poorly characterized role in nuclear divisions in early embryogenesis. This is Protein swallow (swa) from Drosophila pseudoobscura pseudoobscura (Fruit fly).